The chain runs to 301 residues: Rhodopsin (301 aa).

At 1–18 (LHMIHLHWYQYPPMNPMM) the chain is on the extracellular side. Residues 19–43 (YPLLLIFMFITGIPCLAGNFVTIWV) traverse the membrane as a helical segment. Residues 44-55 (FMTTKSLRSPAN) are Cytoplasmic-facing. A helical membrane pass occupies residues 56 to 78 (LLVVNLAMSDFLMMFTMFPPMMI). Residues 79–92 (TCYYHTWTLGPTFC) lie on the Extracellular side of the membrane. An intrachain disulfide couples cysteine 92 to cysteine 169. The chain crosses the membrane as a helical span at residues 93-115 (QVYAFLGNLFGCTSIWTMVFITF). Residues 116-118 (DRY) carry the 'Ionic lock' involved in activated form stabilization motif. The Cytoplasmic portion of the chain corresponds to 116 to 134 (DRYNVIVKGVAGEPLSNKK). Residues 135 to 155 (AALWILSAWVLSFSWCSAPFF) traverse the membrane as a helical segment. At 156–182 (GWNRYVPEGNLTGCGTDYLSEDALSRS) the chain is on the extracellular side. Asparagine 165 carries an N-linked (GlcNAc...) asparagine glycan. A helical membrane pass occupies residues 183-204 (YLYVYSVWVYFLPLLITIYCYV). Over 205 to 245 (FIIKAVAAHEKGMRDQAKKMGIKSLRNEEAQKTSAECRLAK) the chain is Cytoplasmic. The chain crosses the membrane as a helical span at residues 246–267 (IAMTTVALWFIAWTPYLLINWV). The Extracellular segment spans residues 268–278 (GMFARSYLSPV). The helical transmembrane segment at 279–300 (YTIWGYVFAKANAVYNPIVYAI) threads the bilayer. Lysine 288 bears the N6-(retinylidene)lysine mark.

It belongs to the G-protein coupled receptor 1 family. Opsin subfamily. Homodimer. Interacts with GNAQ. Contains one covalently linked retinal chromophore.

The protein localises to the cell projection. It localises to the rhabdomere membrane. Functionally, photoreceptor required for image-forming vision at low light intensity. Can use both retinal and 3-dehydroretinal as visual pigment. Light-induced isomerization of 11-cis to all-trans retinal triggers a conformational change that activates signaling via G-proteins. Signaling via GNAQ probably mediates the activation of phospholipase C. The polypeptide is Rhodopsin (RHO) (Cambarellus shufeldtii (Cajun dwarf crayfish)).